The chain runs to 359 residues: Transcription factor MYB115 (359 aa).

Over residues 1–17 the composition is skewed to polar residues; it reads MYHQNLISSTPNQNSNP. The disordered stretch occupies residues 1-21; that stretch reads MYHQNLISSTPNQNSNPHDWD. 2 HTH myb-type domains span residues 153–208 and 209–259; these read KDII…RPNI and KKND…RRLH. 2 DNA-binding regions (H-T-H motif) span residues 181-204 and 232-255; these read WTSIAKMFQGRVGKQCRERWHNHL and WTEIAKRLPGRSENIVKNHWNATK.

Accumulates in reproductive organs (e.g. flowers and siliques). Expressed at very low levels in vegetative organs.

The protein resides in the nucleus. Transcription activator that recognizes the motif 5'-TAACGG-3' in the promoter of target genes. Promotes vegetative-to-embryonic transition and the formation of somatic embryos from root explants in a WUS-independent manner. Together with MYB118, activates the transcription of S-ACP-DES2/AAD2 and S-ACP-DES3/AAD3 thus promoting the biosynthesis of omega-7 monounsaturated fatty acid in seed endosperm. This is Transcription factor MYB115 from Arabidopsis thaliana (Mouse-ear cress).